We begin with the raw amino-acid sequence, 334 residues long: Sulfhydrogenase 2 subunit beta (334 aa).

4Fe-4S ferredoxin-type domains are found at residues 220-250 and 294-328; these read KVWK…VCDT and CKNY…VLDE. 8 residues coordinate [4Fe-4S] cluster: C229, C232, C235, C239, C306, C309, C312, and C316.

Dimer of heterotetramer of alpha, beta, gamma and delta subunits. The nickel-containing alpha and delta subunits constitute the hydrogenase activity. The beta and gamma subunits (flavin-containing dimer) constitute the sulfur reductase activity. The cofactor is [4Fe-4S] cluster.

It is found in the cytoplasm. The enzyme catalyses n sulfur + H2 = (n-1) sulfur + hydrogen sulfide + H(+). Its function is as follows. Part of a bifunctional enzyme complex that functions as a hydrogen-evolving hydrogenase with sulfur-reducing activity. May play a role in hydrogen cycling during fermentative growth. Activity exhibited with NAD in addition to NADPH. The beta and gamma subunits form the sulfur-reducing component that catalyzes the cytoplasmic production of hydrogen sulfide in the presence of elemental sulfur. In Pyrococcus furiosus (strain ATCC 43587 / DSM 3638 / JCM 8422 / Vc1), this protein is Sulfhydrogenase 2 subunit beta.